Reading from the N-terminus, the 169-residue chain is Regulator of sigma D (169 aa).

Belongs to the Rsd/AlgQ family. Interacts with RpoD.

The protein localises to the cytoplasm. In terms of biological role, binds RpoD and negatively regulates RpoD-mediated transcription activation by preventing the interaction between the primary sigma factor RpoD with the catalytic core of the RNA polymerase and with promoter DNA. May be involved in replacement of the RNA polymerase sigma subunit from RpoD to RpoS during the transition from exponential growth to the stationary phase. The protein is Regulator of sigma D of Yersinia pestis.